Here is a 47-residue protein sequence, read N- to C-terminus: Potamin-1 (47 aa).

3 disulfides stabilise this stretch: Cys3–Cys40, Cys6–Cys24, and Cys7–Cys36.

Its function is as follows. Inhibitor of serine proteases chymotrypsin, papain and trypsin. Has strong antifungal activity against C.albicans and R.solani. Has antibacterial activity against the Gram-positive bacterium C.michiganense, but lacks antibacterial activity against the Gram-positive bacterium S.aureus. Lacks hemolytic activity against human erythrocytes. This Solanum tuberosum (Potato) protein is Potamin-1.